A 312-amino-acid polypeptide reads, in one-letter code: MSGIQPVPGAKPLSMWQQYGPSEKTVRGIVIGGITGGIEICITFPTEYVKTQLQLDERSATPKFRGPIDCVKQTVNGHGFFGLYRGLSVLLYGSIPKSSFRFGTFEYLKSQAADERGNLSPVMRLLCGLGAGLSEAVFAVTPMETVKVKFIHDQGLAQPKYKGFVHGVGCIVKAEGLGGIYKGVTATMAKQGSNQAIRFFVMETLKDWYRGGDNTQPISKPIVGLMGAVAGAASVYGNTPIDVVKTRMQGLEAKKYKNTLDCAMQIWKKEGFFAFYKGTVPRLSRVCLDVGITFMIYDSIIEFLDVYWKKQQ.

Solcar repeat units follow at residues 23-111 (EKTV…LKSQ), 122-208 (VMRL…LKDW), and 218-303 (ISKP…IIEF). Transmembrane regions (helical) follow at residues 29–49 (IVIG…TEYV), 75–95 (VNGH…YGSI), 126–146 (LCGL…METV), 164–184 (FVHG…YKGV), 221–241 (PIVG…NTPI), and 286–306 (VCLD…FLDV).

Belongs to the mitochondrial carrier (TC 2.A.29) family.

The protein resides in the mitochondrion inner membrane. Transport of citrate across inner mitochondrial membrane. The protein is Putative tricarboxylate transport protein, mitochondrial of Caenorhabditis elegans.